The chain runs to 370 residues: 3-isopropylmalate dehydrogenase (370 aa).

Gly77 to Glu90 contacts NAD(+). Residues Arg97, Arg107, Arg135, and Asp226 each contribute to the substrate site. Mg(2+)-binding residues include Asp226, Asp250, and Asp254. An NAD(+)-binding site is contributed by Gly290 to Asn302.

This sequence belongs to the isocitrate and isopropylmalate dehydrogenases family. LeuB type 1 subfamily. Homodimer. Requires Mg(2+) as cofactor. Mn(2+) serves as cofactor.

The protein localises to the cytoplasm. It catalyses the reaction (2R,3S)-3-isopropylmalate + NAD(+) = 4-methyl-2-oxopentanoate + CO2 + NADH. It functions in the pathway amino-acid biosynthesis; L-leucine biosynthesis; L-leucine from 3-methyl-2-oxobutanoate: step 3/4. Functionally, catalyzes the oxidation of 3-carboxy-2-hydroxy-4-methylpentanoate (3-isopropylmalate) to 3-carboxy-4-methyl-2-oxopentanoate. The product decarboxylates to 4-methyl-2 oxopentanoate. This Rhizobium johnstonii (strain DSM 114642 / LMG 32736 / 3841) (Rhizobium leguminosarum bv. viciae) protein is 3-isopropylmalate dehydrogenase.